The sequence spans 387 residues: 1-deoxy-D-xylulose 5-phosphate reductoisomerase (387 aa).

8 residues coordinate NADPH: Thr-10, Gly-11, Ser-12, Ile-13, Gly-36, Lys-37, Asn-38, and Asn-123. Lys-124 contributes to the 1-deoxy-D-xylulose 5-phosphate binding site. Glu-125 is a binding site for NADPH. A Mn(2+)-binding site is contributed by Asp-149. Residues Ser-150, Glu-151, Ser-175, and His-198 each contribute to the 1-deoxy-D-xylulose 5-phosphate site. Position 151 (Glu-151) interacts with Mn(2+). Gly-204 serves as a coordination point for NADPH. Ser-211, Asn-216, Lys-217, and Glu-220 together coordinate 1-deoxy-D-xylulose 5-phosphate. Glu-220 contacts Mn(2+).

The protein belongs to the DXR family. It depends on Mg(2+) as a cofactor. Mn(2+) is required as a cofactor.

It catalyses the reaction 2-C-methyl-D-erythritol 4-phosphate + NADP(+) = 1-deoxy-D-xylulose 5-phosphate + NADPH + H(+). It participates in isoprenoid biosynthesis; isopentenyl diphosphate biosynthesis via DXP pathway; isopentenyl diphosphate from 1-deoxy-D-xylulose 5-phosphate: step 1/6. Catalyzes the NADPH-dependent rearrangement and reduction of 1-deoxy-D-xylulose-5-phosphate (DXP) to 2-C-methyl-D-erythritol 4-phosphate (MEP). This is 1-deoxy-D-xylulose 5-phosphate reductoisomerase from Pelotomaculum thermopropionicum (strain DSM 13744 / JCM 10971 / SI).